The following is a 104-amino-acid chain: uncharacterized protein (104 aa).

This is an uncharacterized protein from Escherichia coli (Bacteriophage T4).